We begin with the raw amino-acid sequence, 833 residues long: Leucine--tRNA ligase (833 aa).

Positions 41 to 52 (PYPSGAGLHVGH) match the 'HIGH' region motif. The 'KMSKS' region motif lies at 610-614 (KMSKS). Lys-613 contributes to the ATP binding site.

It belongs to the class-I aminoacyl-tRNA synthetase family.

It is found in the cytoplasm. It carries out the reaction tRNA(Leu) + L-leucine + ATP = L-leucyl-tRNA(Leu) + AMP + diphosphate. The sequence is that of Leucine--tRNA ligase from Streptococcus mutans serotype c (strain ATCC 700610 / UA159).